We begin with the raw amino-acid sequence, 434 residues long: Maltoporin (434 aa).

An N-terminal signal peptide occupies residues 1–25; it reads MMTTLRKLPLALAIAAGVLTTQAMA.

Belongs to the porin LamB (TC 1.B.3) family. In terms of assembly, homotrimer formed of three 18-stranded antiparallel beta-barrels, containing three independent channels.

It localises to the cell outer membrane. The catalysed reaction is beta-maltose(in) = beta-maltose(out). Its function is as follows. Involved in the transport of maltose and maltodextrins. The sequence is that of Maltoporin from Serratia proteamaculans (strain 568).